A 647-amino-acid chain; its full sequence is Probable inactive receptor kinase RLK902 (647 aa).

Residues Met-1–Gly-29 form the signal peptide. LRR repeat units lie at residues Gly-69–Asn-93, Leu-94–Cys-118, Ser-119–Leu-142, Asn-144–Asn-165, and Leu-166–Gln-192. The chain crosses the membrane as a helical span at residues Gly-268–Phe-288. The Protein kinase domain maps to Arg-365–Arg-639. At Ser-367 the chain carries Phosphoserine. Position 371–379 (Leu-371–Ala-379) interacts with ATP. At Thr-388 the chain carries Phosphothreonine. Residue Lys-393 coordinates ATP. Ser-444 bears the Phosphoserine mark. Thr-520 is modified (phosphothreonine). Ser-540 is subject to Phosphoserine. Thr-618 is subject to Phosphothreonine.

It belongs to the protein kinase superfamily. Ser/Thr protein kinase family. As to quaternary structure, interacts with At3g17950, At3g27210 and At5g05190. In terms of processing, autophosphorylation. As to expression, expressed in root tips, lateral root primordia, stipules, and floral organ abscission zones.

It localises to the cell membrane. This Arabidopsis thaliana (Mouse-ear cress) protein is Probable inactive receptor kinase RLK902 (RLK902).